Here is a 113-residue protein sequence, read N- to C-terminus: UPF0145 protein SynWH7803_1684 (113 aa).

It belongs to the UPF0145 family.

This chain is UPF0145 protein SynWH7803_1684, found in Synechococcus sp. (strain WH7803).